Consider the following 712-residue polypeptide: Ribosome-releasing factor 2, mitochondrial (712 aa).

Residues 1–28 (MQYSLLSAQLRCSRFLLRQQAPFINRCY) constitute a mitochondrion transit peptide. In terms of domain architecture, tr-type G spans 30-309 (DDIRNIGILA…AVNAYLPTPN (280 aa)). Residues 39-46 (AHIDAGKT), 103-107 (DTPGH), and 157-160 (NKMD) each bind GTP.

It belongs to the TRAFAC class translation factor GTPase superfamily. Classic translation factor GTPase family. EF-G/EF-2 subfamily.

Its subcellular location is the mitochondrion. In terms of biological role, mitochondrial GTPase that mediates the disassembly of ribosomes from messenger RNA at the termination of mitochondrial protein biosynthesis. Not involved in the GTP-dependent ribosomal translocation step during translation elongation. The polypeptide is Ribosome-releasing factor 2, mitochondrial (Drosophila virilis (Fruit fly)).